We begin with the raw amino-acid sequence, 307 residues long: Ornithine carbamoyltransferase (307 aa).

Carbamoyl phosphate is bound by residues 50-53, glutamine 77, arginine 101, and 128-131; these read STRT and HPCQ. Residues asparagine 160, aspartate 224, and 228-229 contribute to the L-ornithine site; that span reads SM. Carbamoyl phosphate-binding positions include 264-265 and arginine 292; that span reads CL.

Belongs to the aspartate/ornithine carbamoyltransferase superfamily. OTCase family.

Its subcellular location is the cytoplasm. It catalyses the reaction carbamoyl phosphate + L-ornithine = L-citrulline + phosphate + H(+). Its pathway is amino-acid biosynthesis; L-arginine biosynthesis; L-arginine from L-ornithine and carbamoyl phosphate: step 1/3. In terms of biological role, reversibly catalyzes the transfer of the carbamoyl group from carbamoyl phosphate (CP) to the N(epsilon) atom of ornithine (ORN) to produce L-citrulline. The polypeptide is Ornithine carbamoyltransferase (Clavibacter michiganensis subsp. michiganensis (strain NCPPB 382)).